A 678-amino-acid chain; its full sequence is Probable 3',5'-cyclic phosphodiesterase pde-3 (678 aa).

Disordered regions lie at residues Met1–Thr27, Ala52–Gly95, and Thr223–Glu250. A compositionally biased stretch (low complexity) spans Ala7–Gly19. Composition is skewed to polar residues over residues Thr60–Val85 and Ala231–Asn246. The PDEase domain maps to Arg281–Glu632. His356 functions as the Proton donor in the catalytic mechanism. The a divalent metal cation site is built by His360, His421, Asp422, and Asp531. The interval Glu654–Gln678 is disordered.

Belongs to the cyclic nucleotide phosphodiesterase family. A divalent metal cation is required as a cofactor.

It carries out the reaction a nucleoside 3',5'-cyclic phosphate + H2O = a nucleoside 5'-phosphate + H(+). The protein is Probable 3',5'-cyclic phosphodiesterase pde-3 (pde-3) of Caenorhabditis elegans.